The following is a 210-amino-acid chain: Thymidylate kinase (210 aa).

10–17 (GPEGAGKS) provides a ligand contact to ATP.

It belongs to the thymidylate kinase family.

It catalyses the reaction dTMP + ATP = dTDP + ADP. In terms of biological role, phosphorylation of dTMP to form dTDP in both de novo and salvage pathways of dTTP synthesis. This Pseudomonas fluorescens (strain SBW25) protein is Thymidylate kinase.